A 205-amino-acid polypeptide reads, in one-letter code: Urease accessory protein UreG (205 aa).

10–17 (GPVGAGKT) lines the GTP pocket.

This sequence belongs to the SIMIBI class G3E GTPase family. UreG subfamily. In terms of assembly, homodimer. UreD, UreF and UreG form a complex that acts as a GTP-hydrolysis-dependent molecular chaperone, activating the urease apoprotein by helping to assemble the nickel containing metallocenter of UreC. The UreE protein probably delivers the nickel.

It localises to the cytoplasm. Facilitates the functional incorporation of the urease nickel metallocenter. This process requires GTP hydrolysis, probably effectuated by UreG. This Corynebacterium glutamicum (strain ATCC 13032 / DSM 20300 / JCM 1318 / BCRC 11384 / CCUG 27702 / LMG 3730 / NBRC 12168 / NCIMB 10025 / NRRL B-2784 / 534) protein is Urease accessory protein UreG.